A 184-amino-acid polypeptide reads, in one-letter code: Antigen Sm21.7 (184 aa).

The EF-hand domain occupies 37–72 (LDMKQVNEWIALFDVDKDQKITFEEFCRGLGLKQNE). Ca(2+)-binding residues include D50, D52, D54, K56, and E61.

This chain is Antigen Sm21.7 (SM21.7), found in Schistosoma mansoni (Blood fluke).